The chain runs to 420 residues: Sulfate adenylyltransferase (420 aa).

Alanine 2 is subject to N-acetylalanine.

The protein belongs to the sulfate adenylyltransferase family. The cofactor is Mg(2+).

It catalyses the reaction sulfate + ATP + H(+) = adenosine 5'-phosphosulfate + diphosphate. Its pathway is sulfur metabolism; hydrogen sulfide biosynthesis; sulfite from sulfate: step 1/3. Its activity is regulated as follows. Inhibited by adenosine 5'-phosphosulfate (APS), but not by 3'phosphoadenosine 5'-phosphosulfate (PAPS). Inhibited by AMP, ADP, CTP, GTP, ITP, UTP and anions other than those in group IV. This is Sulfate adenylyltransferase from Pyropia yezoensis (Susabi-nori).